We begin with the raw amino-acid sequence, 229 residues long: Ribonuclease HII (229 aa).

The 188-residue stretch at 42 to 229 (TRIAGVDEVG…KPVHKILYQE (188 aa)) folds into the RNase H type-2 domain. A divalent metal cation contacts are provided by aspartate 48, glutamate 49, and aspartate 139.

Belongs to the RNase HII family. It depends on Mn(2+) as a cofactor. The cofactor is Mg(2+).

Its subcellular location is the cytoplasm. It carries out the reaction Endonucleolytic cleavage to 5'-phosphomonoester.. Functionally, endonuclease that specifically degrades the RNA of RNA-DNA hybrids. The protein is Ribonuclease HII of Ruegeria sp. (strain TM1040) (Silicibacter sp.).